Here is a 258-residue protein sequence, read N- to C-terminus: uncharacterized protein (258 aa).

A signal peptide spans 1–20 (MKCFQKLYIFILILIVLMAG). A lipid anchor (N-palmitoyl cysteine) is attached at Cys21. A lipid anchor (S-diacylglycerol cysteine) is attached at Cys21.

Belongs to the staphylococcal tandem lipoprotein family.

It is found in the cell membrane. This is an uncharacterized protein from Staphylococcus aureus (strain COL).